Here is a 460-residue protein sequence, read N- to C-terminus: Nuclear distribution protein PAC1-1 (460 aa).

The LisH domain maps to 9–41; it reads QADELHRALIAYLTAANLPNTAAALREELNLGE. A coiled-coil region spans residues 74–96; it reads LVTQIMDLESRNHILQSELDNAT. The span at 90–100 shows a compositional bias: polar residues; it reads SELDNATPTSR. Positions 90–115 are disordered; sequence SELDNATPTSRQNKDPVAWLPRAPPR. WD repeat units follow at residues 120-161, 163-203, 207-247, 250-289, 294-354, 355-394, 399-439, and 441-460; these read SHRD…RTIK, HTKA…KNIR, GHDH…CVKT, GHAE…PEPR, GHEH…KTLA, GHDN…KCVK, AHGH…VTPD, and QIRC…IFAN.

The protein belongs to the WD repeat LIS1/nudF family. Self-associates. Interacts with NDL1 and dynein.

Its subcellular location is the cytoplasm. The protein localises to the cytoskeleton. It localises to the spindle pole. Its function is as follows. Positively regulates the activity of the minus-end directed microtubule motor protein dynein. May enhance dynein-mediated microtubule sliding by targeting dynein to the microtubule plus end. Required for nuclear migration during vegetative growth as well as development. Required for retrograde early endosome (EE) transport from the hyphal tip. Required for localization of dynein to the mitotic spindle poles. Recruits additional proteins to the dynein complex at SPBs. In Sordaria macrospora (strain ATCC MYA-333 / DSM 997 / K(L3346) / K-hell), this protein is Nuclear distribution protein PAC1-1.